Here is an 85-residue protein sequence, read N- to C-terminus: COMM domain-containing protein 6 (85 aa).

Met-1 bears the N-acetylmethionine mark. One can recognise a COMM domain in the interval 18–85 (QLVDFQWKLG…KEIAAVIETV (68 aa)).

Belongs to the COMM domain-containing protein 6 family. In terms of assembly, component of the commander complex consisting of the CCC subcomplex and the retriever subcomplex. Component of the CCC (COMMD/CCDC22/CCDC93) subcomplex consisting of COMMD1, COMMD2, COMMD3, COMMD4, COMMD5, COMMD6, COMMD7, COMMD8, COMMD9, COMMD10, CCDC22 and CCDC93; within the complex forms a heterodimer with COMMD1. May form a homodimer with isoform 1. Interacts with RELA, RELB, NFKB1/p105. Does not interact with NFKBIB. Interacts with CCDC22, CCDC93, SCNN1B, CUL4A. In terms of tissue distribution, ubiquitous. Expressed in brain, heart, skeletal muscle, lung, pancreas, liver, kidney, small intestine and placenta.

It localises to the nucleus. It is found in the cytoplasm. Scaffold protein in the commander complex that is essential for endosomal recycling of transmembrane cargos; the commander complex is composed of the CCC subcomplex and the retriever subcomplex. May modulate activity of cullin-RING E3 ubiquitin ligase (CRL) complexes. Down-regulates activation of NF-kappa-B. Inhibits TNF-induced NFKB1 activation. The polypeptide is COMM domain-containing protein 6 (COMMD6) (Homo sapiens (Human)).